The following is a 1181-amino-acid chain: Katanin p80 WD40 repeat-containing subunit B1 homolog KTN80.2 (1181 aa).

7 WD repeats span residues 13 to 53 (AHSA…SLMS), 56 to 95 (GHTSAVDSVAFDSAEVLVLAGASSGVIKLWDVEEAKMVRA), 98 to 137 (GHRSNCSAVEFHPFGEFLASGSSDANLKIWDIRKKGCIQT), 140 to 181 (GHSR…HEFK), 183 to 221 (HEGPIRSLDFHPLEFLLATGSADRTVKFWDLETFELIGS), 224 to 264 (PEAT…DGVD), and 266 to 303 (GWSTLGDLCISEGKLLGCSYYQNSVGIWVSDISQIEPY). Positions 114 to 130 (FLASGSSDANLKIWDIR) match the DWD box motif. Disordered regions lie at residues 361 to 383 (AHKSGSLSTPATSTGQAGDNKSL), 503 to 597 (KPPR…ESKS), 702 to 739 (TSMATDTPPVTSTRPDRTSATNLTSDVSGVTSKRQTRT), 754 to 869 (KMKS…VIST), and 988 to 1008 (TKTQQSSDILTQKEEPQISGR). 2 stretches are compositionally biased toward polar residues: residues 365 to 379 (GSLSTPATSTGQAGD) and 509 to 526 (RSPSTKYNEARWATSTDS). Basic and acidic residues-rich tracts occupy residues 530–553 (DSKKNGLESSRDMDLPTGLRDDRG) and 569–585 (RSERVLSPEKAGDELKS). Composition is skewed to polar residues over residues 703-739 (SMATDTPPVTSTRPDRTSATNLTSDVSGVTSKRQTRT), 754-791 (KMKSDEPSITSTWPDRTSATDLTSDVSGVISSRQTRTS), 822-841 (SATNLTSDESPVTSTRQAKT), and 850-859 (ILNQRQTTNM). A compositionally biased stretch (basic and acidic residues) spans 998-1008 (TQKEEPQISGR).

This sequence belongs to the WD repeat KATNB1 family. As to quaternary structure, component of KTN80-KTN1 complexes composed of a hexamer of KTN1-KTN80 heterodimers that sense microtubule (MT) geometry to confer precise MT severing. Interacts directly with AAA1/KTN1. Interacts with subunits of the CUL4-based E3 ligase complex DDB1A and DDB1B. As to expression, expressed at low levels in siliques, flowers, leaves, stems and roots.

The protein localises to the cytoplasm. The protein resides in the cytoskeleton. May participate in a complex which severs microtubules in an ATP-dependent manner. Microtubule severing may promote rapid reorganization of cellular microtubule arrays. Confers precision to microtubule (MT) severing by specific targeting of KTN1 to MT cleavage sites such as crossover or branching nucleation sites. Together with other KTN80s, regulates cell elongation by modulating MT organization. Negative regulator of abscisic acid (ABA) responses. May function as a substrate receptor for cullin-RING ubiquitin ligase 4 complexes (CRL4), a family of E3 ligases involved in protein degradation. The sequence is that of Katanin p80 WD40 repeat-containing subunit B1 homolog KTN80.2 from Arabidopsis thaliana (Mouse-ear cress).